A 541-amino-acid polypeptide reads, in one-letter code: Acyl-CoA ligase M9 (541 aa).

186-197 (AMSTSGTTGLPK) contacts AMP. Residues 445 to 519 (ELEAVLHQMP…DSLPRNSSGK (75 aa)) are AMP-binding.

This sequence belongs to the ATP-dependent AMP-binding enzyme family.

The protein operates within secondary metabolite biosynthesis. In terms of biological role, acyl-CoA ligase; part of the gene cluster that mediates the biosynthesis of squalestatin S1 (SQS1, also known as zaragozic acid A), a heavily oxidized fungal polyketide that offers potent cholesterol lowering activity by targeting squalene synthase (SS). SQS1 is composed of a 2,8-dioxobicyclic[3.2.1]octane-3,4,5-tricarboxyclic acid core that is connected to two lipophilic polyketide arms. These initial steps feature the priming of an unusual benzoic acid starter unit onto the highly reducing polyketide synthase pks2, followed by oxaloacetate extension and product release to generate a tricarboxylic acid containing product. The phenylalanine ammonia lyase (PAL) M7 and the acyl-CoA ligase M9 are involved in transforming phenylalanine into benzoyl-CoA. The citrate synthase-like protein R3 is involved in connecting the C-alpha-carbons of the hexaketide chain and oxaloacetate to afford the tricarboxylic acid unit. The potential hydrolytic enzymes, M8 and M10, are in close proximity to pks2 and may participate in product release. On the other side, the tetraketide arm is synthesized by a the squalestatin tetraketide synthase pks1 and enzymatically esterified to the core in the last biosynthetic step, by the acetyltransferase M4. The biosynthesis of the tetraketide must involve 3 rounds of chain extension. After the first and second rounds methyl-transfer occurs, and in all rounds of extension the ketoreductase and dehydratase are active. The enoyl reductase and C-MeT of pks1 are not active in the final round of extension. The acetyltransferase M4 appears to have a broad substrate selectivity for its acyl CoA substrate, allowing the in vitro synthesis of novel squalestatins. The biosynthesis of SQS1 requires several oxidative steps likely performed by oxidoreductases M1, R1 and R2. Finally, in support of the identification of the cluster as being responsible for SQS1 production, the cluster contains a gene encoding a putative squalene synthase (SS) R6, suggesting a likely mechanism for self-resistance. The polypeptide is Acyl-CoA ligase M9 (Phoma sp. (strain ATCC 20986 / MF5453)).